A 135-amino-acid polypeptide reads, in one-letter code: Large ribosomal subunit protein uL16c (135 aa).

It belongs to the universal ribosomal protein uL16 family. In terms of assembly, part of the 50S ribosomal subunit.

Its subcellular location is the plastid. It localises to the chloroplast. The chain is Large ribosomal subunit protein uL16c from Ranunculus macranthus (Large buttercup).